The following is a 194-amino-acid chain: Orotate phosphoribosyltransferase (194 aa).

5-phospho-alpha-D-ribose 1-diphosphate is bound by residues Arg102, Lys103, Lys106, His108, and 129–137; that span reads EDVVTTGGS. Orotate is bound by residues Thr133 and Arg161.

The protein belongs to the purine/pyrimidine phosphoribosyltransferase family. PyrE subfamily. Homodimer. Mg(2+) is required as a cofactor.

The enzyme catalyses orotidine 5'-phosphate + diphosphate = orotate + 5-phospho-alpha-D-ribose 1-diphosphate. It functions in the pathway pyrimidine metabolism; UMP biosynthesis via de novo pathway; UMP from orotate: step 1/2. Functionally, catalyzes the transfer of a ribosyl phosphate group from 5-phosphoribose 1-diphosphate to orotate, leading to the formation of orotidine monophosphate (OMP). The sequence is that of Orotate phosphoribosyltransferase from Prochlorococcus marinus (strain MIT 9211).